Here is a 501-residue protein sequence, read N- to C-terminus: Type B diterpene cyclase (501 aa).

The protein belongs to the terpene synthase family. In terms of assembly, monomer. The cofactor is Mg(2+).

The catalysed reaction is geranylgeranyl diphosphate = tuberculosinyl diphosphate. Strongly inhibited by 15-aza-dihydrogeranylgeraniol and 5-isopropyl-N,N,N,2-tetramethyl-4-(piperidine-1-carbonyloxy)benzenaminium chloride (Amo-1618). Inhibited by GGPP concentrations higher than 50 uM. Its function is as follows. Catalyzes the formation of tuberculosinyl diphosphate from geranylgeranyl diphosphate (GGPP). It could also react with (14R/S)-14,15-oxidoGGPP to generate 3alpha- and 3beta-hydroxytuberculosinyl diphosphate. The chain is Type B diterpene cyclase from Mycobacterium tuberculosis (strain ATCC 25618 / H37Rv).